A 153-amino-acid polypeptide reads, in one-letter code: D-aminoacyl-tRNA deacylase (153 aa).

The Gly-cisPro motif, important for rejection of L-amino acids motif lies at 140–141 (GP).

This sequence belongs to the DTD family. In terms of assembly, homodimer.

It localises to the cytoplasm. The enzyme catalyses glycyl-tRNA(Ala) + H2O = tRNA(Ala) + glycine + H(+). It carries out the reaction a D-aminoacyl-tRNA + H2O = a tRNA + a D-alpha-amino acid + H(+). In terms of biological role, an aminoacyl-tRNA editing enzyme that deacylates mischarged D-aminoacyl-tRNAs. Also deacylates mischarged glycyl-tRNA(Ala), protecting cells against glycine mischarging by AlaRS. Acts via tRNA-based rather than protein-based catalysis; rejects L-amino acids rather than detecting D-amino acids in the active site. By recycling D-aminoacyl-tRNA to D-amino acids and free tRNA molecules, this enzyme counteracts the toxicity associated with the formation of D-aminoacyl-tRNA entities in vivo and helps enforce protein L-homochirality. This chain is D-aminoacyl-tRNA deacylase, found in Trichodesmium erythraeum (strain IMS101).